Here is a 63-residue protein sequence, read N- to C-terminus: MRNPVVWGMIYFAVGCIFTYLAASSPGSMWSFYSILLMVFAAYNISISFKMFAFSFKIKKNQK.

The first 15 residues, Met-1–Gly-15, serve as a signal peptide directing secretion. Residue Cys-16 is the site of N-palmitoyl cysteine attachment. Residue Cys-16 is the site of S-diacylglycerol cysteine attachment. Residues Ser-34–Phe-56 traverse the membrane as a helical segment.

It is found in the cell membrane. This is an uncharacterized protein from Bacillus subtilis (strain 168).